A 274-amino-acid chain; its full sequence is 3-methyl-2-oxobutanoate hydroxymethyltransferase (274 aa).

2 residues coordinate Mg(2+): D46 and D85. 3-methyl-2-oxobutanoate is bound by residues 46-47 (DS), D85, and K115. Residue E117 coordinates Mg(2+). E184 serves as the catalytic Proton acceptor.

It belongs to the PanB family. In terms of assembly, homodecamer; pentamer of dimers. It depends on Mg(2+) as a cofactor.

The protein localises to the cytoplasm. The catalysed reaction is 3-methyl-2-oxobutanoate + (6R)-5,10-methylene-5,6,7,8-tetrahydrofolate + H2O = 2-dehydropantoate + (6S)-5,6,7,8-tetrahydrofolate. It participates in cofactor biosynthesis; coenzyme A biosynthesis. Catalyzes the reversible reaction in which hydroxymethyl group from 5,10-methylenetetrahydrofolate is transferred onto alpha-ketoisovalerate to form ketopantoate. The polypeptide is 3-methyl-2-oxobutanoate hydroxymethyltransferase (Halobacterium salinarum (strain ATCC 29341 / DSM 671 / R1)).